The following is a 306-amino-acid chain: UDP-3-O-acyl-N-acetylglucosamine deacetylase (306 aa).

Residues histidine 79, histidine 238, and aspartate 242 each coordinate Zn(2+). The active-site Proton donor is the histidine 265.

This sequence belongs to the LpxC family. The cofactor is Zn(2+).

It carries out the reaction a UDP-3-O-[(3R)-3-hydroxyacyl]-N-acetyl-alpha-D-glucosamine + H2O = a UDP-3-O-[(3R)-3-hydroxyacyl]-alpha-D-glucosamine + acetate. Its pathway is glycolipid biosynthesis; lipid IV(A) biosynthesis; lipid IV(A) from (3R)-3-hydroxytetradecanoyl-[acyl-carrier-protein] and UDP-N-acetyl-alpha-D-glucosamine: step 2/6. In terms of biological role, catalyzes the hydrolysis of UDP-3-O-myristoyl-N-acetylglucosamine to form UDP-3-O-myristoylglucosamine and acetate, the committed step in lipid A biosynthesis. This chain is UDP-3-O-acyl-N-acetylglucosamine deacetylase, found in Shewanella sp. (strain ANA-3).